We begin with the raw amino-acid sequence, 120 residues long: Flagellar protein FliT (120 aa).

Residues 1–50 (MERHQHLLSEYQQILTLSEQMLMLATVENWNALVDLEMTYLKAVENTANI) are required for homodimerization. Residues 60-98 (LQELLRQKLRSILENEIEIKRLLQRRLDKLSELVGQSTR) are fliD binding.

Belongs to the FliT family. In terms of assembly, homodimer. Interacts with FliD and FlhC.

It localises to the cytoplasm. The protein resides in the cytosol. Functionally, dual-function protein that regulates the transcription of class 2 flagellar operons and that also acts as an export chaperone for the filament-capping protein FliD. As a transcriptional regulator, acts as an anti-FlhDC factor; it directly binds FlhC, thus inhibiting the binding of the FlhC/FlhD complex to class 2 promoters, resulting in decreased expression of class 2 flagellar operons. As a chaperone, effects FliD transition to the membrane by preventing its premature polymerization, and by directing it to the export apparatus. This is Flagellar protein FliT from Yersinia pestis bv. Antiqua (strain Antiqua).